Here is a 97-residue protein sequence, read N- to C-terminus: Large ribosomal subunit protein uL23 (97 aa).

It belongs to the universal ribosomal protein uL23 family. Part of the 50S ribosomal subunit. Contacts protein L29, and trigger factor when it is bound to the ribosome.

One of the early assembly proteins it binds 23S rRNA. One of the proteins that surrounds the polypeptide exit tunnel on the outside of the ribosome. Forms the main docking site for trigger factor binding to the ribosome. The sequence is that of Large ribosomal subunit protein uL23 from Brucella anthropi (strain ATCC 49188 / DSM 6882 / CCUG 24695 / JCM 21032 / LMG 3331 / NBRC 15819 / NCTC 12168 / Alc 37) (Ochrobactrum anthropi).